Consider the following 478-residue polypeptide: Ribosomal RNA small subunit methyltransferase F (478 aa).

S-adenosyl-L-methionine-binding positions include 123-129 (AAAPGSK), glutamate 147, aspartate 174, and aspartate 192. Residue cysteine 245 is the Nucleophile of the active site.

Belongs to the class I-like SAM-binding methyltransferase superfamily. RsmB/NOP family.

The protein localises to the cytoplasm. It catalyses the reaction cytidine(1407) in 16S rRNA + S-adenosyl-L-methionine = 5-methylcytidine(1407) in 16S rRNA + S-adenosyl-L-homocysteine + H(+). In terms of biological role, specifically methylates the cytosine at position 1407 (m5C1407) of 16S rRNA. This is Ribosomal RNA small subunit methyltransferase F from Vibrio parahaemolyticus serotype O3:K6 (strain RIMD 2210633).